The chain runs to 66 residues: Large ribosomal subunit protein bL33c (66 aa).

This sequence belongs to the bacterial ribosomal protein bL33 family.

It is found in the plastid. It localises to the chloroplast. The chain is Large ribosomal subunit protein bL33c from Illicium oligandrum (Star anise).